The following is a 162-amino-acid chain: Anthrone oxygenase nsrD (162 aa).

Helical transmembrane passes span 17 to 37, 54 to 74, and 86 to 106; these read FLSGSMMSLSALVIPLFLDTI, GSIYMPALCVATCGIYGYVAL, and PYVLAAVSTLAMVPFTWWVMV. Asn109 carries N-linked (GlcNAc...) asparagine glycosylation. Residues 130–150 traverse the membrane as a helical segment; sequence LVVKWAWLHVVRSLYPLFGAF.

Belongs to the anthrone oxygenase family.

It is found in the membrane. The catalysed reaction is emodin anthrone + O2 = emodin + H2O + H(+). Its pathway is secondary metabolite biosynthesis. In terms of biological role, anthrone oxygenase; part of the gene cluster that mediates the biosynthesis of the tetrahydroxanthone dimer neosartorin, which exhibits antibacterial activity. The two different monomeric units appear to be synthesized by the same set of enzymes, among which the Baeyer-Villiger monooxygenase nsrF is the key enzyme for the divergence of the biosynthetic routes. The pathway begins with the synthesis of atrochrysone thioester by the polyketide synthase nsrB. The atrochrysone carboxyl ACP thioesterase nsrC then breaks the thioester bond and releases the atrochrysone carboxylic acid from AacuL. Atrochrysone carboxylic acid is decarboxylated by the decarboxylase nsrE, and oxidized by the anthrone oxygenase nsrD to yield emodin. Emodin is then reduced to emodin hydroquinone by the oxidoreductase nsrR. A-ring reduction by the short chain dehydrogenase nsrJ, dehydration by the scytalone dehydratase-like protein nsrI and probable spontaneous re-oxidation, results in overall deoxygenation to chrysophanol. The Baeyer-Villiger monooxygenase nsrF accepts chrysophanol as a substrate to insert one oxygen atom at two different positions to yield the precursors of both monomric units. NsrF is promiscuous/flexible in interacting with the 2 (non methylated and methylated) aromatic rings of chrysophanol, thus diverging the biosynthetic pathway at this point. After the hydrolysis of the lactones, methylesterification by the methyltransferase nsrG yields respectively moniliphenone and 2,2',6'-trihydroxy-4-methyl-6-methoxya-cyldiphenylmethanone. The next steps are the hydroxylation by the FAD-dependent monooxygenase nsrK, followed by isomerization by the monooxygenase nsrQ. The short chain dehydrogenase/reductase nsrO then catalyzes the C-5 ketoreduction to give the xanthone skeleton of blennolide C and 5-acetylblennolide A. The acetyltransferase nsrL has a strict substrate specificity and uses only blennolide A but not blennolide C to yield 5-acetylblennolide A as the single-acetylated product. In the final step of the biosynthesis, the heterodimerization of the 2 xanthones, blennolide C and 5-acetylblennolide A, is catalyzed by the cytochrome P450 monooxygenase nsrP. NsrP can utilize at least three different xanthones as its substrates to perform the dimerization reaction. This chain is Anthrone oxygenase nsrD, found in Aspergillus novofumigatus (strain IBT 16806).